Consider the following 243-residue polypeptide: Orotidine 5'-phosphate decarboxylase (243 aa).

Residues D19, K41, 69-78 (DLKFFDIPAT), T124, R185, Q194, G214, and R215 contribute to the substrate site. The active-site Proton donor is K71.

This sequence belongs to the OMP decarboxylase family. Type 1 subfamily. In terms of assembly, homodimer.

The enzyme catalyses orotidine 5'-phosphate + H(+) = UMP + CO2. It participates in pyrimidine metabolism; UMP biosynthesis via de novo pathway; UMP from orotate: step 2/2. Functionally, catalyzes the decarboxylation of orotidine 5'-monophosphate (OMP) to uridine 5'-monophosphate (UMP). This chain is Orotidine 5'-phosphate decarboxylase, found in Xanthomonas euvesicatoria pv. vesicatoria (strain 85-10) (Xanthomonas campestris pv. vesicatoria).